We begin with the raw amino-acid sequence, 417 residues long: NADH-quinone oxidoreductase subunit D (417 aa).

Belongs to the complex I 49 kDa subunit family. NDH-1 is composed of 14 different subunits. Subunits NuoB, C, D, E, F, and G constitute the peripheral sector of the complex.

It is found in the cell inner membrane. It carries out the reaction a quinone + NADH + 5 H(+)(in) = a quinol + NAD(+) + 4 H(+)(out). Functionally, NDH-1 shuttles electrons from NADH, via FMN and iron-sulfur (Fe-S) centers, to quinones in the respiratory chain. The immediate electron acceptor for the enzyme in this species is believed to be ubiquinone. Couples the redox reaction to proton translocation (for every two electrons transferred, four hydrogen ions are translocated across the cytoplasmic membrane), and thus conserves the redox energy in a proton gradient. This is NADH-quinone oxidoreductase subunit D from Coxiella burnetii (strain Dugway 5J108-111).